Reading from the N-terminus, the 40-residue chain is Dolichyl-diphosphooligosaccharide--protein glycosyltransferase subunit 4 (40 aa).

Over 1–4 (MITD) the chain is Lumenal. A helical membrane pass occupies residues 5–25 (VQLAIFSNVLGVFLFLLVVAY). The Cytoplasmic portion of the chain corresponds to 26-40 (HYINANTGKSSIKNK).

This sequence belongs to the OST4 family. In terms of assembly, component of the oligosaccharyltransferase (OST) complex.

It localises to the endoplasmic reticulum membrane. Functionally, subunit of the oligosaccharyl transferase (OST) complex that catalyzes the initial transfer of a defined glycan (Glc(3)Man(9)GlcNAc(2) in eukaryotes) from the lipid carrier dolichol-pyrophosphate to an asparagine residue within an Asn-X-Ser/Thr consensus motif in nascent polypeptide chains, the first step in protein N-glycosylation. N-glycosylation occurs cotranslationally and the complex associates with the Sec61 complex at the channel-forming translocon complex that mediates protein translocation across the endoplasmic reticulum (ER). All subunits are required for a maximal enzyme activity. In Drosophila mojavensis (Fruit fly), this protein is Dolichyl-diphosphooligosaccharide--protein glycosyltransferase subunit 4.